The following is a 378-amino-acid chain: P2X receptor A (378 aa).

The Cytoplasmic portion of the chain corresponds to 1–27 (MGFSFDWDDIFQYSTVKIVRIRDRRLG). Residues 28–48 (ILHLSFLVGIVAYIVVYSAII) form a helical membrane-spanning segment. The Lumenal segment spans residues 49–307 (KKGYLFTEVP…IQTGTIGSFH (259 aa)). The segment at 290-303 (RHGIRVIFIQTGTI) is pore-forming motif. Residues 308–328 (FQTLLLTLVSGLGLLAVATTV) form a helical membrane-spanning segment. Residues 329 to 378 (VDQLAIRLLPQRKSYSSLKFQVTESMSNPMKKRITTDEGEDVLYTRIEGL) are Cytoplasmic-facing.

It belongs to the P2X receptor family.

The protein resides in the contractile vacuole membrane. Functionally, P2X receptors are ATP-gated ion channels that play a role in intracellular calcium signaling. Not required for the purinergic response to extracellular nucleotides. Inward currents evoked by intracellular ATP and ATP analogs. Exclusively selective for ATP over other nucleotides. Insensitive to P2 receptor antagonists PPADS, suramin and 2',3'-O-(2,4,6-trinitrophenyl)-ATP but inhibited by nanomolar concentrations of copper and sodium ion. More permeable to ammonium than either sodium or potassium ions and less permeable to choline. It has been reported that p2xA is not essential for osmoregulation, however this information is in contradiction with another source which indicates that p2xA is required for osmoregulation. Found to be permeable to chloride ions. Inhibited by copper and sodium ions. This is P2X receptor A (p2xA) from Dictyostelium discoideum (Social amoeba).